The chain runs to 297 residues: 4-hydroxy-tetrahydrodipicolinate synthase (297 aa).

Threonine 47 contributes to the pyruvate binding site. Residue tyrosine 136 is the Proton donor/acceptor of the active site. Lysine 165 acts as the Schiff-base intermediate with substrate in catalysis. Isoleucine 206 contacts pyruvate.

This sequence belongs to the DapA family. In terms of assembly, homotetramer; dimer of dimers.

The protein localises to the cytoplasm. The catalysed reaction is L-aspartate 4-semialdehyde + pyruvate = (2S,4S)-4-hydroxy-2,3,4,5-tetrahydrodipicolinate + H2O + H(+). It functions in the pathway amino-acid biosynthesis; L-lysine biosynthesis via DAP pathway; (S)-tetrahydrodipicolinate from L-aspartate: step 3/4. Catalyzes the condensation of (S)-aspartate-beta-semialdehyde [(S)-ASA] and pyruvate to 4-hydroxy-tetrahydrodipicolinate (HTPA). This Campylobacter fetus subsp. fetus (strain 82-40) protein is 4-hydroxy-tetrahydrodipicolinate synthase.